The following is an 893-amino-acid chain: Beta-adaptin-like protein C (893 aa).

A disordered region spans residues Thr593 to Ser621.

It belongs to the adaptor complexes large subunit family. In terms of assembly, adaptor protein complexes are heterotetramers composed of two large adaptins (beta-type subunit and alpha-type or delta-type or epsilon-type or gamma-type subunit), a medium adaptin (mu-type subunit) and a small adaptin (sigma-type subunit).

Its subcellular location is the golgi apparatus. It is found in the trans-Golgi network. The protein resides in the cytoplasmic vesicle. The protein localises to the clathrin-coated vesicle membrane. Its function is as follows. Subunit of clathrin-associated adaptor protein complex that plays a role in protein sorting in the late-Golgi/trans-Golgi network (TGN) and/or endosomes. The AP complexes mediate both the recruitment of clathrin to membranes and the recognition of sorting signals within the cytosolic tails of transmembrane cargo molecules. In Arabidopsis thaliana (Mouse-ear cress), this protein is Beta-adaptin-like protein C (BETAC-AD).